The sequence spans 227 residues: 2,3-bisphosphoglycerate-dependent phosphoglycerate mutase (227 aa).

Residues 7–14, 20–21, R59, 86–89, K97, 113–114, and 182–183 contribute to the substrate site; these read RHGFSEWN, TG, ERHY, RR, and GN. Catalysis depends on H8, which acts as the Tele-phosphohistidine intermediate. The active-site Proton donor/acceptor is the E86.

The protein belongs to the phosphoglycerate mutase family. BPG-dependent PGAM subfamily. Homodimer.

It catalyses the reaction (2R)-2-phosphoglycerate = (2R)-3-phosphoglycerate. The protein operates within carbohydrate degradation; glycolysis; pyruvate from D-glyceraldehyde 3-phosphate: step 3/5. Its function is as follows. Catalyzes the interconversion of 2-phosphoglycerate and 3-phosphoglycerate. This Haemophilus influenzae (strain PittGG) protein is 2,3-bisphosphoglycerate-dependent phosphoglycerate mutase.